Here is an 808-residue protein sequence, read N- to C-terminus: Transcription activator of gluconeogenesis PAAG_01030 (808 aa).

Residues 1–90 (MTSSVRNGSP…SAKDPLRPRR (90 aa)) are disordered. Low complexity predominate over residues 69–83 (STSSTAASANNASAK). Positions 97 to 125 (CFACQRAHLTCGDERPCQRCIKRGLQDTC) form a DNA-binding region, zn(2)-C6 fungal-type. Residues 158-170 (AARNKVNSNSQQR) show a composition bias toward polar residues. 5 disordered regions span residues 158–203 (AARN…FSTP), 236–285 (SAFQ…YGST), 322–387 (GAGD…IYNQ), 442–461 (PPTN…STPS), and 598–629 (TGGS…DNQS). Over residues 171–188 (NGTNSNSDNNSTNTNSNN) the composition is skewed to low complexity. Polar residues-rich tracts occupy residues 189–203 (KPSH…FSTP), 248–279 (FDLS…SQNP), 339–359 (GRSS…NQSP), and 377–387 (GPTNPRNIYNQ). Composition is skewed to low complexity over residues 442–451 (PPTNTQHQQQ) and 598–619 (TGGS…SRNS). Over residues 620–629 (ATTTVMDNQS) the composition is skewed to polar residues.

It belongs to the ERT1/acuK family.

The protein localises to the nucleus. Functionally, transcription factor which regulates nonfermentable carbon utilization. Activator of gluconeogenetic genes. This Paracoccidioides lutzii (strain ATCC MYA-826 / Pb01) (Paracoccidioides brasiliensis) protein is Transcription activator of gluconeogenesis PAAG_01030.